The primary structure comprises 545 residues: E3 ubiquitin-protein ligase ipaH9.8 (545 aa).

Positions 1-242 are interaction with target proteins; that stretch reads MLPINNNFSL…YHGPRIYFSM (242 aa). LRR repeat units follow at residues 57–77, 78–99, 100–117, 118–139, 140–157, 158–179, 182–203, and 205–228; these read NSDE…NLPA, QITL…PVTL, KKLY…VLPP, ALES…PDSL, LTMN…SLPQ, ALKN…SEGN, VVRE…ILNL, and NECS…QRLT. The segment at 243 to 250 is linker; that stretch reads SDGQQNTL. The segment at 251–545 is E3 ubiquitin-protein ligase catalytic domain; sequence HRPLADAVTA…SENGSQLHHS (295 aa). The 293-residue stretch at 253-545 folds into the NEL domain; it reads PLADAVTAWF…SENGSQLHHS (293 aa). Cysteine 337 acts as the Glycyl thioester intermediate in catalysis.

This sequence belongs to the LRR-containing bacterial E3 ligase family. In terms of assembly, also interacts with human and mouse U2AF1 (U2AF35). Post-translationally, ubiquitinated in the presence of host E1 ubiquitin-activating enzyme, E2 ubiquitin-conjugating enzyme and ubiquitin.

Its subcellular location is the secreted. It localises to the host cytoplasm. It is found in the host nucleus. The catalysed reaction is S-ubiquitinyl-[E2 ubiquitin-conjugating enzyme]-L-cysteine + [acceptor protein]-L-lysine = [E2 ubiquitin-conjugating enzyme]-L-cysteine + N(6)-ubiquitinyl-[acceptor protein]-L-lysine.. With respect to regulation, exists in an autoinhibited state in the absence of substrate protein, due to interactions of the leucine-rich repeats with NEL domain. Is activated upon binding to a substrate protein. Its function is as follows. Effector E3 ubiquitin ligase that interferes with host's ubiquitination pathway and modulates the acute inflammatory responses, thus facilitating bacterial colonization within the host cell. Interacts with IKBKG (NEMO) and TNIP1 (ABIN-1), a ubiquitin-binding adapter protein, which results in TNIP1-dependent 'Lys-27'-linked polyubiquitination of IKBKG. Consequently, polyubiquitinated IKBKG undergoes proteasome-dependent degradation, which perturbs NF-kappa-B activation during bacterial infection. Mediates polyubiquitination of host U2AF1, leading to its proteasomal degradation. Catalyzes 'Lys-48'-linked polyubiquitination and subsequent degradation of a subset of host guanylate-binding proteins (GBP1, GBP2, GBP4 and GBP6), thereby suppressing host cell defense. In contrast, host GBP3 and GBP7 are not ubiquitinated by IpaH9.8. Uses UBE2D2 (UBCH5B) as an E2 ubiquitin-conjugating enzyme. This chain is E3 ubiquitin-protein ligase ipaH9.8 (ipaH9.8), found in Shigella flexneri serotype X (strain 2002017).